The primary structure comprises 145 residues: Hemoglobin subunit beta (145 aa).

Positions M1–H145 constitute a Globin domain. At T11 the chain carries Phosphothreonine. At S43 the chain carries Phosphoserine. K58 is modified (N6-acetyllysine). H62 serves as a coordination point for heme b. K81 carries the post-translational modification N6-acetyllysine. H91 contributes to the heme b binding site. C92 is modified (S-nitrosocysteine).

The protein belongs to the globin family. Heterotetramer of two alpha chains and two beta chains. Red blood cells.

Functionally, involved in oxygen transport from the lung to the various peripheral tissues. The protein is Hemoglobin subunit beta (HBB) of Bos gaurus frontalis (Domestic gayal).